The primary structure comprises 269 residues: 5'-nucleotidase SurE (269 aa).

Residues aspartate 11, aspartate 12, serine 43, and asparagine 101 each coordinate a divalent metal cation.

It belongs to the SurE nucleotidase family. Requires a divalent metal cation as cofactor.

It localises to the cytoplasm. It carries out the reaction a ribonucleoside 5'-phosphate + H2O = a ribonucleoside + phosphate. Its function is as follows. Nucleotidase that shows phosphatase activity on nucleoside 5'-monophosphates. The chain is 5'-nucleotidase SurE from Prochlorococcus marinus (strain MIT 9515).